The primary structure comprises 403 residues: S-adenosylmethionine synthase (403 aa).

ATP is bound at residue H16. D18 lines the Mg(2+) pocket. E44 provides a ligand contact to K(+). E57 and Q100 together coordinate L-methionine. The segment at 100–110 (QSPDIAQGVDR) is flexible loop. The segment at 106–126 (QGVDRSYESRSGSASTDAHDL) is disordered. ATP-binding positions include 176-178 (DGK), 248-249 (KF), D257, 263-264 (RK), A280, and K284. Residue D257 participates in L-methionine binding. K288 lines the L-methionine pocket.

This sequence belongs to the AdoMet synthase family. Homotetramer; dimer of dimers. Mg(2+) serves as cofactor. Requires K(+) as cofactor.

It is found in the cytoplasm. It carries out the reaction L-methionine + ATP + H2O = S-adenosyl-L-methionine + phosphate + diphosphate. It functions in the pathway amino-acid biosynthesis; S-adenosyl-L-methionine biosynthesis; S-adenosyl-L-methionine from L-methionine: step 1/1. Functionally, catalyzes the formation of S-adenosylmethionine (AdoMet) from methionine and ATP. The overall synthetic reaction is composed of two sequential steps, AdoMet formation and the subsequent tripolyphosphate hydrolysis which occurs prior to release of AdoMet from the enzyme. The chain is S-adenosylmethionine synthase from Clavibacter sepedonicus (Clavibacter michiganensis subsp. sepedonicus).